A 499-amino-acid polypeptide reads, in one-letter code: Ubiquitin carboxyl-terminal hydrolase 16 (499 aa).

One can recognise a USP domain in the interval 53–497 (VGLINRGNDC…YAYMLYYERV (445 aa)). Catalysis depends on Cys62, which acts as the Nucleophile. His407 (proton acceptor) is an active-site residue.

It belongs to the peptidase C19 family.

The enzyme catalyses Thiol-dependent hydrolysis of ester, thioester, amide, peptide and isopeptide bonds formed by the C-terminal Gly of ubiquitin (a 76-residue protein attached to proteins as an intracellular targeting signal).. In Saccharomyces cerevisiae (strain ATCC 204508 / S288c) (Baker's yeast), this protein is Ubiquitin carboxyl-terminal hydrolase 16 (UBP16).